Consider the following 88-residue polypeptide: Beta-insect excitatory toxin LqhIT1b (88 aa).

The N-terminal stretch at 1–18 (MKFFLLFLVVLPIMGVLG) is a signal peptide. An LCN-type CS-alpha/beta domain is found at 20-83 (KNGYAVDSKG…ISDTTKKYCD (64 aa)). Cystine bridges form between Cys-34/Cys-55, Cys-40/Cys-60, Cys-44/Cys-62, and Cys-56/Cys-82.

The protein belongs to the long (4 C-C) scorpion toxin superfamily. Sodium channel inhibitor family. Beta subfamily. As to expression, expressed by the venom gland.

It is found in the secreted. In terms of biological role, excitatory insect toxins induce a spastic paralysis. They bind voltage-independently at site-4 of sodium channels (Nav) and shift the voltage of activation toward more negative potentials thereby affecting sodium channel activation and promoting spontaneous and repetitive firing. The sequence is that of Beta-insect excitatory toxin LqhIT1b from Leiurus hebraeus (Hebrew deathstalker scorpion).